The following is a 255-amino-acid chain: 5'-nucleotidase SurE (255 aa).

Residues Asp-8, Asp-9, Ser-40, and Asn-92 each coordinate a divalent metal cation.

The protein belongs to the SurE nucleotidase family. Requires a divalent metal cation as cofactor.

It localises to the cytoplasm. It carries out the reaction a ribonucleoside 5'-phosphate + H2O = a ribonucleoside + phosphate. Its function is as follows. Nucleotidase that shows phosphatase activity on nucleoside 5'-monophosphates. The sequence is that of 5'-nucleotidase SurE from Brucella canis (strain ATCC 23365 / NCTC 10854 / RM-666).